The following is a 776-amino-acid chain: ADP-ribosylation factor GTPase-activating protein AGD2 (776 aa).

The BAR domain maps to 2-226; the sequence is AGFINLEDSP…IHQVLTYAQQ (225 aa). The interval 248–267 is disordered; that stretch reads QSELDSQQASAKADPSDVGG. In terms of domain architecture, PH spans 290–421; sequence EVTKQGYLLK…WVNKITAAIT (132 aa). Residues 467–604 form the Arf-GAP domain; sequence DDVLTILREI…ALVVKDEREA (138 aa). The segment at 482 to 505 adopts a C4-type zinc-finger fold; that stretch reads CAECNAPDPDWASLNLGVLMCIEC. ANK repeat units follow at residues 683–712 and 716–745; these read QGCS…DINM and HGRT…RPSI.

In terms of tissue distribution, expressed in roots, hypocotyls, cotyledons, leaf and shoot apical meristems and siliques.

Probable GTPase-activating protein. This is ADP-ribosylation factor GTPase-activating protein AGD2 (AGD2) from Arabidopsis thaliana (Mouse-ear cress).